A 126-amino-acid polypeptide reads, in one-letter code: Small ribosomal subunit protein uS13 (126 aa).

A disordered region spans residues 96 to 126 (LPVRGQQTKTNARTRKGRRKGTVANKKKVSK). A compositionally biased stretch (basic residues) spans 107–126 (ARTRKGRRKGTVANKKKVSK).

The protein belongs to the universal ribosomal protein uS13 family. In terms of assembly, part of the 30S ribosomal subunit. Forms a loose heterodimer with protein S19. Forms two bridges to the 50S subunit in the 70S ribosome.

Its function is as follows. Located at the top of the head of the 30S subunit, it contacts several helices of the 16S rRNA. In the 70S ribosome it contacts the 23S rRNA (bridge B1a) and protein L5 of the 50S subunit (bridge B1b), connecting the 2 subunits; these bridges are implicated in subunit movement. Contacts the tRNAs in the A and P-sites. The sequence is that of Small ribosomal subunit protein uS13 from Hydrogenobaculum sp. (strain Y04AAS1).